The primary structure comprises 420 residues: Gamma-glutamyl phosphate reductase (420 aa).

The protein belongs to the gamma-glutamyl phosphate reductase family.

Its subcellular location is the cytoplasm. The catalysed reaction is L-glutamate 5-semialdehyde + phosphate + NADP(+) = L-glutamyl 5-phosphate + NADPH + H(+). It functions in the pathway amino-acid biosynthesis; L-proline biosynthesis; L-glutamate 5-semialdehyde from L-glutamate: step 2/2. In terms of biological role, catalyzes the NADPH-dependent reduction of L-glutamate 5-phosphate into L-glutamate 5-semialdehyde and phosphate. The product spontaneously undergoes cyclization to form 1-pyrroline-5-carboxylate. The protein is Gamma-glutamyl phosphate reductase of Oenococcus oeni (strain ATCC BAA-331 / PSU-1).